Consider the following 148-residue polypeptide: Ribonuclease pancreatic (148 aa).

A signal peptide spans 1-25; that stretch reads MGLEKSLMLFPLLVLVLGLVQPSLG. Positions 32 and 35 each coordinate substrate. The active-site Proton acceptor is the histidine 37. Cystine bridges form between cysteine 50/cysteine 108, cysteine 64/cysteine 119, cysteine 82/cysteine 134, and cysteine 89/cysteine 96. Residues 65–69, lysine 90, and arginine 109 each bind substrate; that span reads KPVNT. The Proton donor role is filled by histidine 143.

It belongs to the pancreatic ribonuclease family. In terms of assembly, monomer. Interacts with and forms tight 1:1 complexes with RNH1. Dimerization of two such complexes may occur. Interaction with RNH1 inhibits this protein. As to expression, pancreas.

It localises to the secreted. It carries out the reaction an [RNA] containing cytidine + H2O = an [RNA]-3'-cytidine-3'-phosphate + a 5'-hydroxy-ribonucleotide-3'-[RNA].. The catalysed reaction is an [RNA] containing uridine + H2O = an [RNA]-3'-uridine-3'-phosphate + a 5'-hydroxy-ribonucleotide-3'-[RNA].. In terms of biological role, endonuclease that catalyzes the cleavage of RNA on the 3' side of pyrimidine nucleotides. Acts on single-stranded and double-stranded RNA. This Gerbilliscus gambianus (Gambian gerbil) protein is Ribonuclease pancreatic (RNASE1).